The primary structure comprises 222 residues: Small ribosomal subunit protein uS3 (222 aa).

Residues 39-108 (IRRHIKEKLY…TISLDIKEIK (70 aa)) form the KH type-2 domain.

Belongs to the universal ribosomal protein uS3 family. As to quaternary structure, part of the 30S ribosomal subunit. Forms a tight complex with proteins S10 and S14.

Functionally, binds the lower part of the 30S subunit head. Binds mRNA in the 70S ribosome, positioning it for translation. The sequence is that of Small ribosomal subunit protein uS3 from Caldicellulosiruptor saccharolyticus (strain ATCC 43494 / DSM 8903 / Tp8T 6331).